The sequence spans 177 residues: Small ribosomal subunit protein mS23 (177 aa).

Alanine 2 is modified (N-acetylalanine). Lysine 83 is modified (N6-succinyllysine). Lysine 102 bears the N6-acetyllysine mark. Residues leucine 145–proline 177 are disordered.

This sequence belongs to the mitochondrion-specific ribosomal protein mS23 family. Component of the mitochondrial ribosome small subunit (28S) which comprises a 12S rRNA and about 30 distinct proteins.

The protein localises to the mitochondrion. This chain is Small ribosomal subunit protein mS23, found in Mus musculus (Mouse).